Consider the following 493-residue polypeptide: Glutamate synthase [NADPH] small chain (493 aa).

NADP(+) is bound at residue 299–313; sequence GGGDTGADCVATALR.

Belongs to the glutamate synthase family. Aggregate of 4 catalytic active heterodimers, consisting of a large and a small subunit.

It carries out the reaction 2 L-glutamate + NADP(+) = L-glutamine + 2-oxoglutarate + NADPH + H(+). It functions in the pathway amino-acid biosynthesis; L-glutamate biosynthesis via GLT pathway; L-glutamate from 2-oxoglutarate and L-glutamine (NADP(+) route): step 1/1. The protein operates within energy metabolism; nitrogen metabolism. The sequence is that of Glutamate synthase [NADPH] small chain (gltB) from Bacillus subtilis (strain 168).